Here is a 60-residue protein sequence, read N- to C-terminus: Potassium channel toxin alpha-KTx 3.16 (60 aa).

The signal sequence occupies residues 1–23 (MKVFSAVLIILFVCSMIIGISEG). 3 cysteine pairs are disulfide-bonded: cysteine 30–cysteine 50, cysteine 36–cysteine 55, and cysteine 40–cysteine 57.

The protein belongs to the short scorpion toxin superfamily. Potassium channel inhibitor family. Alpha-KTx 03 subfamily. In terms of tissue distribution, expressed by the venom gland.

The protein resides in the secreted. Functionally, potassium channel inhibitor. In Mesobuthus gibbosus (Mediterranean checkered scorpion), this protein is Potassium channel toxin alpha-KTx 3.16.